The chain runs to 1068 residues: DNA-directed RNA polymerase subunit beta (1068 aa).

Belongs to the RNA polymerase beta chain family. In plastids the minimal PEP RNA polymerase catalytic core is composed of four subunits: alpha, beta, beta', and beta''. When a (nuclear-encoded) sigma factor is associated with the core the holoenzyme is formed, which can initiate transcription.

It is found in the plastid. Its subcellular location is the chloroplast. The enzyme catalyses RNA(n) + a ribonucleoside 5'-triphosphate = RNA(n+1) + diphosphate. Its function is as follows. DNA-dependent RNA polymerase catalyzes the transcription of DNA into RNA using the four ribonucleoside triphosphates as substrates. This Staurastrum punctulatum (Green alga) protein is DNA-directed RNA polymerase subunit beta.